Here is a 270-residue protein sequence, read N- to C-terminus: Fibroblast growth factor 5 (270 aa).

A signal peptide spans Met-1–Ala-20. The segment at Arg-25–Ser-86 is disordered. Positions Pro-41–Arg-69 are enriched in low complexity. A compositionally biased stretch (polar residues) spans Leu-76 to Ser-86. An N-linked (GlcNAc...) asparagine glycan is attached at Asn-112. The interval Glu-237–Ser-257 is disordered.

It belongs to the heparin-binding growth factors family. Interacts with FGFR1 and FGFR2. Affinity between fibroblast growth factors (FGFs) and their receptors is increased by heparan sulfate glycosaminoglycans that function as coreceptors.

It is found in the secreted. In terms of biological role, plays an important role in the regulation of cell proliferation and cell differentiation. Required for normal regulation of the hair growth cycle. Functions as an inhibitor of hair elongation by promoting progression from anagen, the growth phase of the hair follicle, into catagen the apoptosis-induced regression phase. The sequence is that of Fibroblast growth factor 5 (FGF5) from Bos taurus (Bovine).